The primary structure comprises 64 residues: Large ribosomal subunit protein bL35 (64 aa).

Positions 1 to 44 are disordered; the sequence is MPKLKTNRGAAKRFKVKASGRISRARSNHSHILTKKDPKRKRRL. Basic residues predominate over residues 10–44; it reads AAKRFKVKASGRISRARSNHSHILTKKDPKRKRRL.

Belongs to the bacterial ribosomal protein bL35 family.

This is Large ribosomal subunit protein bL35 from Halorhodospira halophila (strain DSM 244 / SL1) (Ectothiorhodospira halophila (strain DSM 244 / SL1)).